Consider the following 783-residue polypeptide: MAAKAFPMVGDAANVSGGATSSREYHLNDSHHNILPLHSSSSSASPSSHLALLCDNAKMVRKRAASEMELQIGGGISEHGRFLRRNAPLLGDLRVCGTNFGGGAGGDNGGGNSLGVSVSHPNHVVVNNYSTMQIAPPPTSTNLSVTSTSDATHLAYMEQLPPNEPQAPLPLCVFSGLPLFPAPSRARNAAGAALQPAPLPVTASGSAIGVNSSSGGGMGDNGTAMAWIDGIIKDLIHISTHVSIPQLIQNVREIIHPCNPNLAALLEYRLRSLTTAAAAADPLAANVYDDWRRKETLQPQSQDAITHPLHLPDSMTPPPWEITLPPAAAAATTRHQLRDNNPSSLPFVPVPSSDRLDQQQQPGRMDNEKQPESQSQSQSPPASENTAAAALIRTESIMRREKEELEQQKKDEEGLHLLTLLLQCAEAVAADNLDEANRMLLQVSELSTPYGTSAQRVAAYFSEAMSARLVNSCLGIYASAPLNALPLSLNQKMASAFQVFNGISPFVKFSHFTANQAIQEAFEREDRVHIIDLDIMQGLQWPGLFHILASRPGGPPLVRLTGLGTSMEALEATGKRLSDFAQKLGLPFEFFPVADKVGNLDPQRLNVNKREAVAVHWLQHSLYDVTGSDTNTLWLLQRLAPKVVTVVEQDLSHAGSFLGRFVEAIHYYSALFDSLGACYGEESEERHAVEQQLLSREIRNVLAVGGPSRSGEVKFNNWREKFQQSGFRGVSLAGNAAAQATLLLGMFHSDGYTLAEDNGALKLGWKDLCLLTASAWRPPPLAQ.

A disordered region spans residues 298 to 387 (QPQSQDAITH…QSPPASENTA (90 aa)). Low complexity-rich tracts occupy residues 342–353 (PSSLPFVPVPSS) and 372–384 (ESQSQSQSPPASE). Residues 387 to 418 (AAAALIRTESIMRREKEELEQQKKDEEGLHLL) are a coiled coil. A GRAS domain is found at 408–777 (QKKDEEGLHL…LCLLTASAWR (370 aa)). The interval 415–478 (LHLLTLLLQC…LVNSCLGIYA (64 aa)) is leucine repeat I (LRI). A LxCxE motif motif is present at residues 422–426 (LQCAE). The segment at 497 to 562 (FQVFNGISPF…GGPPLVRLTG (66 aa)) is VHIID. Residues 528–532 (VHIID) carry the VHIID motif. Residues 572 to 604 (ATGKRLSDFAQKLGLPFEFFPVADKVGNLDPQR) form a leucine repeat II (LRII) region. The tract at residues 613–700 (VAVHWLQHSL…QQLLSREIRN (88 aa)) is PFYRE. An SAW region spans residues 703–777 (AVGGPSRSGE…LCLLTASAWR (75 aa)).

It belongs to the GRAS family.

It is found in the nucleus. Its function is as follows. Putative transcription factor involved in asymmetric cell division. Required for differentiation of endodermis and graviresponses. This chain is Protein SCARECROW (SCR), found in Ipomoea nil (Japanese morning glory).